Reading from the N-terminus, the 527-residue chain is Organic cation/carnitine transporter 2 (527 aa).

At 1 to 27 the chain is on the cytoplasmic side; it reads MAEPTQPLLTDSNSSSPRSLDDTIESY. Residues 28 to 48 traverse the membrane as a helical segment; the sequence is IGSFGWAQFLQAALVSFSGVF. Over 49-119 the chain is Extracellular; sequence DAQQTFISVF…SFVKGLPESS (71 aa). A helical membrane pass occupies residues 120–140; that stretch reads FFVGCLIGGLVLSTLADSSLG. The Cytoplasmic portion of the chain corresponds to 141-149; sequence RKNMLFLSC. A helical membrane pass occupies residues 150-170; that stretch reads LVMAISTMLTVFSPNIWVYAV. Over 171–176 the chain is Extracellular; sequence LRFVNG. The chain crosses the membrane as a helical span at residues 177-195; sequence FGRATIGTCALVLSTELVG. Residue 190 to 197 participates in ATP binding; sequence STELVGKK. The Cytoplasmic segment spans residues 196–201; sequence KKWRGR. A helical transmembrane segment spans residues 202-222; that stretch reads VGIMSFFGFMLGFLSLPLMAY. Residues 223–230 are Extracellular-facing; the sequence is MNRGSSWR. A helical transmembrane segment spans residues 231–251; that stretch reads ILYAWTSIPTIIYCVLVRFFV. Residues 252 to 326 are Cytoplasmic-facing; it reads CESPRWLFVR…LVEKRWALKR (75 aa). The helical transmembrane segment at 327–347 threads the bilayer; that stretch reads LSAVMAIAFGIGLVYYGMPLA. Residues 348–356 lie on the Extracellular side of the membrane; it reads LSNLDFNIY. A helical transmembrane segment spans residues 357-377; it reads LSAAFNALMDLPANLITLFLV. Topologically, residues 378-385 are cytoplasmic; it reads DKLSRRNA. The chain crosses the membrane as a helical span at residues 386-406; the sequence is LIGFTALGGVSSVLIFALHNM. Topologically, residues 407 to 415 are extracellular; the sequence is RIGNHGALQ. The chain crosses the membrane as a helical span at residues 416-436; it reads LALELISYFSACSAFNMEMIY. The Cytoplasmic portion of the chain corresponds to 437 to 448; that stretch reads TIELFPTCVRNS. A helical membrane pass occupies residues 449–469; it reads AIAMARQALVLGGVFSPIMVA. Residues 470–475 are Extracellular-facing; sequence AGRKNA. A helical transmembrane segment spans residues 476–496; it reads FWSFGLFGLAIGLLGLFAVGL. Over 497–527 the chain is Cytoplasmic; the sequence is PETRGSDLCDTMDEEECKDRRSKVAVNNVIA.

Belongs to the major facilitator (TC 2.A.1) superfamily. Organic cation transporter (TC 2.A.1.19) family. In terms of tissue distribution, weakly expressed in roots, including tips and initiation site of lateral roots, siliques and flowers, especially in pollen and stigma.

The protein resides in the vacuole membrane. Its function is as follows. High affinity carnitine transporter involved in the active cellular uptake of carnitine. Also transports organic cations. In Arabidopsis thaliana (Mouse-ear cress), this protein is Organic cation/carnitine transporter 2 (OCT2).